The primary structure comprises 1279 residues: ATP-dependent helicase/nuclease subunit A (1279 aa).

Residues 4–499 form the UvrD-like helicase ATP-binding domain; sequence TKWTDEQRQA…VKLFKNFRSR (496 aa). Residue 25 to 32 participates in ATP binding; the sequence is AGAGAGKT. The region spanning 526 to 853 is the UvrD-like helicase C-terminal domain; that stretch reads EEALKVGASY…RIMSIHKSKG (328 aa).

Belongs to the helicase family. AddA subfamily. As to quaternary structure, heterodimer of AddA and AddB/RexB. It depends on Mg(2+) as a cofactor.

The catalysed reaction is Couples ATP hydrolysis with the unwinding of duplex DNA by translocating in the 3'-5' direction.. The enzyme catalyses ATP + H2O = ADP + phosphate + H(+). Its function is as follows. The heterodimer acts as both an ATP-dependent DNA helicase and an ATP-dependent, dual-direction single-stranded exonuclease. Recognizes the chi site generating a DNA molecule suitable for the initiation of homologous recombination. The AddA nuclease domain is required for chi fragment generation; this subunit has the helicase and 3' -&gt; 5' nuclease activities. The polypeptide is ATP-dependent helicase/nuclease subunit A (Clostridium botulinum (strain Okra / Type B1)).